Reading from the N-terminus, the 271-residue chain is 2-amino-3,7-dideoxy-D-threo-hept-6-ulosonate synthase (271 aa).

Asp33 acts as the Proton acceptor in catalysis. Residues 33–37 and 153–155 contribute to the 1-deoxy-D-threo-hexo-2,5-diulose 6-phosphate site; these read DHGVS and YPR. Catalysis depends on Tyr153, which acts as the Proton donor. Lys184 acts as the Schiff-base intermediate with substrate in catalysis. 1-deoxy-D-threo-hexo-2,5-diulose 6-phosphate-binding positions include 209 to 210 and 236 to 237; these read GG and GR.

The protein belongs to the DeoC/FbaB aldolase family. ADHS subfamily. In terms of assembly, homodecamer.

The catalysed reaction is 1-deoxy-D-threo-hexo-2,5-diulose 6-phosphate + L-aspartate 4-semialdehyde = 2,3-dioxopropyl phosphate + 2-amino-2,3,7-trideoxy-D-lyxo-hept-6-ulosonate. Catalyzes a transaldol reaction between 6-deoxy-5-ketofructose 1-phosphate (DKFP) and L-aspartate semialdehyde (ASA) with an elimination of hydroxypyruvaldehyde phosphate to yield 2-amino-3,7-dideoxy-D-threo-hept-6-ulosonate (ADH). Plays a key role in an alternative pathway of the biosynthesis of 3-dehydroquinate (DHQ), which is involved in the canonical pathway for the biosynthesis of aromatic amino acids. In Methanococcus aeolicus (strain ATCC BAA-1280 / DSM 17508 / OCM 812 / Nankai-3), this protein is 2-amino-3,7-dideoxy-D-threo-hept-6-ulosonate synthase.